Consider the following 409-residue polypeptide: Probable glutaryl-CoA dehydrogenase, mitochondrial (409 aa).

110 to 111 (RS) provides a ligand contact to substrate. Residues 149 to 152 (FGLT), Ser-158, and 184 to 186 (WIS) each bind FAD. Ser-158 is a binding site for substrate. Substrate is bound by residues 261–265 (FGCLN) and Arg-268. Glu-388 (proton acceptor) is an active-site residue. Residues Thr-390 and Phe-408 each coordinate FAD.

It belongs to the acyl-CoA dehydrogenase family. Requires FAD as cofactor.

Its subcellular location is the mitochondrion matrix. It catalyses the reaction glutaryl-CoA + oxidized [electron-transfer flavoprotein] + 2 H(+) = (2E)-butenoyl-CoA + reduced [electron-transfer flavoprotein] + CO2. The protein operates within amino-acid metabolism; lysine degradation. It functions in the pathway amino-acid metabolism; tryptophan metabolism. This Caenorhabditis elegans protein is Probable glutaryl-CoA dehydrogenase, mitochondrial.